The following is a 371-amino-acid chain: Peptide chain release factor 2 (371 aa).

Glutamine 251 bears the N5-methylglutamine mark.

This sequence belongs to the prokaryotic/mitochondrial release factor family. Methylated by PrmC. Methylation increases the termination efficiency of RF2.

Its subcellular location is the cytoplasm. Peptide chain release factor 2 directs the termination of translation in response to the peptide chain termination codons UGA and UAA. This Arthrobacter sp. (strain FB24) protein is Peptide chain release factor 2.